The following is a 94-amino-acid chain: Co-chaperonin GroES (94 aa).

This sequence belongs to the GroES chaperonin family. Heptamer of 7 subunits arranged in a ring. Interacts with the chaperonin GroEL.

The protein localises to the cytoplasm. Together with the chaperonin GroEL, plays an essential role in assisting protein folding. The GroEL-GroES system forms a nano-cage that allows encapsulation of the non-native substrate proteins and provides a physical environment optimized to promote and accelerate protein folding. GroES binds to the apical surface of the GroEL ring, thereby capping the opening of the GroEL channel. In Desulfitobacterium hafniense (strain DSM 10664 / DCB-2), this protein is Co-chaperonin GroES.